We begin with the raw amino-acid sequence, 425 residues long: Dihydroorotase (425 aa).

Residues H56 and H58 each coordinate Zn(2+). Substrate-binding positions include 58–60 (HYR) and N90. Positions 148, 175, and 228 each coordinate Zn(2+). N274 provides a ligand contact to substrate. A Zn(2+)-binding site is contributed by D301. The active site involves D301. Residues H305 and 319–320 (FG) each bind substrate.

It belongs to the metallo-dependent hydrolases superfamily. DHOase family. Class I DHOase subfamily. Requires Zn(2+) as cofactor.

The enzyme catalyses (S)-dihydroorotate + H2O = N-carbamoyl-L-aspartate + H(+). The protein operates within pyrimidine metabolism; UMP biosynthesis via de novo pathway; (S)-dihydroorotate from bicarbonate: step 3/3. Its function is as follows. Catalyzes the reversible cyclization of carbamoyl aspartate to dihydroorotate. The protein is Dihydroorotase of Lactobacillus acidophilus (strain ATCC 700396 / NCK56 / N2 / NCFM).